The primary structure comprises 246 residues: 3-oxoacyl-[acyl-carrier-protein] reductase FabG (246 aa).

Residues 62 to 63 (NV) and Asn89 each bind NADP(+). Ser141 contributes to the substrate binding site. The active-site Proton acceptor is Tyr154. NADP(+)-binding positions include 154–158 (YAASK) and Ile187.

Belongs to the short-chain dehydrogenases/reductases (SDR) family. In terms of assembly, homotetramer.

It catalyses the reaction a (3R)-hydroxyacyl-[ACP] + NADP(+) = a 3-oxoacyl-[ACP] + NADPH + H(+). It participates in lipid metabolism; fatty acid biosynthesis. In terms of biological role, catalyzes the NADPH-dependent reduction of beta-ketoacyl-ACP substrates to beta-hydroxyacyl-ACP products, the first reductive step in the elongation cycle of fatty acid biosynthesis. This Thermotoga maritima (strain ATCC 43589 / DSM 3109 / JCM 10099 / NBRC 100826 / MSB8) protein is 3-oxoacyl-[acyl-carrier-protein] reductase FabG (fabG).